Consider the following 790-residue polypeptide: Spermatogenesis-associated protein 20 (790 aa).

The segment covering 1 to 19 (MSHHSSPPPKHKGEHKGHG) has biased composition (basic residues). The disordered stretch occupies residues 1 to 67 (MSHHSSPPPK…PPPAPPKTVN (67 aa)). Residue Ser-5 is modified to Phosphoserine. A compositionally biased stretch (basic and acidic residues) spans 23–36 (GSERGSSSRDKDRS). The residue at position 653 (Ser-653) is a Phosphoserine.

The protein resides in the secreted. In terms of biological role, may play a role in fertility regulation. The polypeptide is Spermatogenesis-associated protein 20 (Spata20) (Mus musculus (Mouse)).